A 247-amino-acid chain; its full sequence is MVDREQLVQKARLAEQAERYDDMAAAMKAVTELNEPLSNEERNLLSVAYKNVVGARRSSWRVISSIEQKTSADGNEKKIEMVRAYREKIEKELETVCQDVLSLLDNFLIKNCSETQYESKVFYLKMKGDYYRYLAEVATGEKRATVVESSEKAYSEAHEISKEHMQPTHPIRLGLALNYSVFYYEIQNAPEQACHLAKTAFDDAIAELDTLNEDSYKDSTLIMQLLRDNLTLWTSDQQDDDGGEGNN.

Belongs to the 14-3-3 family. Homodimer, and heterodimer with other family members.

It is found in the cytoplasm. Its function is as follows. Adapter protein implicated in the regulation of a large spectrum of both general and specialized signaling pathways. Binds to a large number of partners, usually by recognition of a phosphoserine or phosphothreonine motif. Binding generally results in the modulation of the activity of the binding partner. The protein is 14-3-3 protein gamma-A (ywhag-a) of Xenopus laevis (African clawed frog).